Here is an 82-residue protein sequence, read N- to C-terminus: Small ribosomal subunit protein uS17 (82 aa).

Belongs to the universal ribosomal protein uS17 family. In terms of assembly, part of the 30S ribosomal subunit.

One of the primary rRNA binding proteins, it binds specifically to the 5'-end of 16S ribosomal RNA. This chain is Small ribosomal subunit protein uS17, found in Shewanella sp. (strain W3-18-1).